Here is a 147-residue protein sequence, read N- to C-terminus: Small nuclear ribonucleoprotein-associated protein B (147 aa).

The 84-residue stretch at 1–84 (MGTTKMVSLL…IVSLSVQGPP (84 aa)) folds into the Sm domain. Disordered stretches follow at residues 87–106 (DPSMRGSLLSGPGVARPAGR) and 128–147 (APPPPAGFGRGAPPPGFRPV).

Belongs to the snRNP SmB/SmN family. In terms of assembly, belongs to the 40S cdc5-associated complex (or cwf complex), a spliceosome sub-complex reminiscent of a late-stage spliceosome composed of the U2, U5 and U6 snRNAs and at least brr2, cdc5, cwf2/prp3, cwf3/syf1, cwf4/syf3, cwf5/ecm2, spp42/cwf6, cwf7/spf27, cwf8, cwf9, cwf10, cwf11, cwf12, prp45/cwf13, cwf14, cwf15, cwf16, cwf17, cwf18, cwf19, cwf20, cwf21, cwf22, cwf23, cwf24, cwf25, cwf26, cyp7/cwf27, cwf28, cwf29/ist3, lea1, msl1, prp5/cwf1, prp10, prp12/sap130, prp17, prp22, sap61, sap62, sap114, sap145, slu7, smb1, smd1, smd3, smf1, smg1 and syf2.

It localises to the nucleus. It is found in the cytoplasm. Functionally, plays a role in pre-mRNA splicing as a core component of the spliceosomal U1, U2, U4 and U5 small nuclear ribonucleoproteins (snRNPs), the building blocks of the spliceosome. In Schizosaccharomyces pombe (strain 972 / ATCC 24843) (Fission yeast), this protein is Small nuclear ribonucleoprotein-associated protein B (smb1).